Here is an 807-residue protein sequence, read N- to C-terminus: Glycerol-3-phosphate acyltransferase (807 aa).

Residues 308–313 carry the HXXXXD motif motif; sequence CHRSHM.

This sequence belongs to the GPAT/DAPAT family.

The protein localises to the cell inner membrane. It carries out the reaction sn-glycerol 3-phosphate + an acyl-CoA = a 1-acyl-sn-glycero-3-phosphate + CoA. It functions in the pathway phospholipid metabolism; CDP-diacylglycerol biosynthesis; CDP-diacylglycerol from sn-glycerol 3-phosphate: step 1/3. This chain is Glycerol-3-phosphate acyltransferase, found in Shewanella pealeana (strain ATCC 700345 / ANG-SQ1).